Here is a 407-residue protein sequence, read N- to C-terminus: Enolase-binding protein (407 aa).

Positions 1-24 (MALGNALYPLTATVFLCVVGFATS) are cleaved as a signal peptide. Residues 25–366 (SNENSRFLIN…FGQAYPGFRN (342 aa)) are Extracellular-facing. N-linked (GlcNAc...) asparagine glycans are attached at residues Asn52, Asn78, Asn161, and Asn250. The helical transmembrane segment at 367–387 (VAIGAAILFFSVLGVAIIDMI) threads the bilayer. Topologically, residues 388–407 (RRTIANRRAKRLHLGKYSRT) are cytoplasmic.

(Microbial infection) Interacts with ENO/enolase from parasites P.berghei and P.falciparum. As to expression, expressed in the female midgut epithelium.

It is found in the cell membrane. Functionally, (Microbial infection) Acts as a receptor for ENO/enolase from parasites P.berghei and P.falciparum. The interaction is involved in the invasion of the mosquito midgut by P.berghei ookinete, but is dispensable for P.falciparum ookinete invasion. The polypeptide is Enolase-binding protein (Anopheles gambiae (African malaria mosquito)).